A 170-amino-acid chain; its full sequence is Lipoprotein signal peptidase (170 aa).

3 helical membrane-spanning segments follow: residues 13 to 33 (IFISILVFFDQWSKYLVVKYI), 72 to 92 (LFFLIIPIIILIFVFSFALKE), and 96 to 113 (IARIALVLILSGGIGNII). Catalysis depends on residues Asp124 and Asp146. A helical transmembrane segment spans residues 142–162 (FNFADSYVVIGITLFIIYDLF).

It belongs to the peptidase A8 family.

It is found in the cell inner membrane. The catalysed reaction is Release of signal peptides from bacterial membrane prolipoproteins. Hydrolyzes -Xaa-Yaa-Zaa-|-(S,diacylglyceryl)Cys-, in which Xaa is hydrophobic (preferably Leu), and Yaa (Ala or Ser) and Zaa (Gly or Ala) have small, neutral side chains.. It participates in protein modification; lipoprotein biosynthesis (signal peptide cleavage). Functionally, this protein specifically catalyzes the removal of signal peptides from prolipoproteins. The sequence is that of Lipoprotein signal peptidase from Borrelia turicatae (strain 91E135).